A 346-amino-acid polypeptide reads, in one-letter code: Farnesyl diphosphate synthase 1 (346 aa).

Isopentenyl diphosphate contacts are provided by lysine 52, arginine 55, and glutamine 90. 2 residues coordinate Mg(2+): aspartate 97 and aspartate 101. A DDXXD motif motif is present at residues 97 to 101; sequence DDIMD. Arginine 106 serves as a coordination point for dimethylallyl diphosphate. Position 107 (arginine 107) interacts with isopentenyl diphosphate. Residues lysine 194, threonine 195, and glutamine 233 each coordinate dimethylallyl diphosphate. Residues 236–240 carry the DDXXD motif motif; sequence DDYLD. Lysine 250 and lysine 259 together coordinate dimethylallyl diphosphate.

The protein belongs to the FPP/GGPP synthase family. Mg(2+) is required as a cofactor. It depends on Mn(2+) as a cofactor. As to expression, highly expressed in shoots.

It catalyses the reaction isopentenyl diphosphate + (2E)-geranyl diphosphate = (2E,6E)-farnesyl diphosphate + diphosphate. It carries out the reaction isopentenyl diphosphate + dimethylallyl diphosphate = (2E)-geranyl diphosphate + diphosphate. Its pathway is isoprenoid biosynthesis; farnesyl diphosphate biosynthesis; farnesyl diphosphate from geranyl diphosphate and isopentenyl diphosphate: step 1/1. It participates in isoprenoid biosynthesis; geranyl diphosphate biosynthesis; geranyl diphosphate from dimethylallyl diphosphate and isopentenyl diphosphate: step 1/1. Catalyzes the sequential condensation of isopentenyl pyrophosphate (IPP) with the allylic pyrophosphates, dimethylallyl pyrophosphate (DMAPP), and then with the resultant geranylpyrophosphate (GPP) to the ultimate product farnesyl pyrophosphate (FPP). Has a 4.5 time greater affinity for GPP versus DMAPP. The polypeptide is Farnesyl diphosphate synthase 1 (FDS-1) (Artemisia spiciformis (Spiked big sagebrush)).